Reading from the N-terminus, the 206-residue chain is Large ribosomal subunit protein uL4 (206 aa).

Positions 49–79 (KVKTRSEISRTTKKMYKQKGTGNARHGAASA) are disordered.

This sequence belongs to the universal ribosomal protein uL4 family. Part of the 50S ribosomal subunit.

Its function is as follows. One of the primary rRNA binding proteins, this protein initially binds near the 5'-end of the 23S rRNA. It is important during the early stages of 50S assembly. It makes multiple contacts with different domains of the 23S rRNA in the assembled 50S subunit and ribosome. In terms of biological role, forms part of the polypeptide exit tunnel. The polypeptide is Large ribosomal subunit protein uL4 (Methylobacterium sp. (strain 4-46)).